Consider the following 348-residue polypeptide: tRNA N6-adenosine threonylcarbamoyltransferase (348 aa).

Histidine 115 and histidine 119 together coordinate Fe cation. Residues 138 to 142 (LVSGG), aspartate 171, glycine 184, and asparagine 276 each bind substrate. Aspartate 304 contributes to the Fe cation binding site.

Belongs to the KAE1 / TsaD family. Fe(2+) is required as a cofactor.

The protein resides in the cytoplasm. The catalysed reaction is L-threonylcarbamoyladenylate + adenosine(37) in tRNA = N(6)-L-threonylcarbamoyladenosine(37) in tRNA + AMP + H(+). Its function is as follows. Required for the formation of a threonylcarbamoyl group on adenosine at position 37 (t(6)A37) in tRNAs that read codons beginning with adenine. Is involved in the transfer of the threonylcarbamoyl moiety of threonylcarbamoyl-AMP (TC-AMP) to the N6 group of A37, together with TsaE and TsaB. TsaD likely plays a direct catalytic role in this reaction. In Xylella fastidiosa (strain M23), this protein is tRNA N6-adenosine threonylcarbamoyltransferase.